Here is a 395-residue protein sequence, read N- to C-terminus: Membrane glycoprotein spo14 (395 aa).

Residues 1-346 (MAELHLSFPA…KLEDAGVILR (346 aa)) lie on the Cytoplasmic side of the membrane. WD repeat units follow at residues 250 to 285 (MIRD…RFMS) and 290 to 326 (KLSQ…CLQF). A helical; Signal-anchor for type II membrane protein membrane pass occupies residues 347 to 367 (LSLMFPFVLAILYFYLQLLFP). Residues 368–395 (DEKLDAIHRFFSFILHIFSKYTIRNYDL) are Lumenal-facing.

The protein localises to the endoplasmic reticulum membrane. The protein resides in the golgi apparatus. It is found in the cis-Golgi network membrane. Required for the formation of transport vesicles from the ER. This function involves the cytoplasmic domain of the protein, which is thought to interact with the small GTP-binding protein sar1. The protein is Membrane glycoprotein spo14 (spo14) of Schizosaccharomyces pombe (strain 972 / ATCC 24843) (Fission yeast).